Consider the following 99-residue polypeptide: Nucleoid-associated protein UUR10_0100 (99 aa).

It belongs to the YbaB/EbfC family. Homodimer.

Its subcellular location is the cytoplasm. The protein resides in the nucleoid. Binds to DNA and alters its conformation. May be involved in regulation of gene expression, nucleoid organization and DNA protection. This is Nucleoid-associated protein UUR10_0100 from Ureaplasma urealyticum serovar 10 (strain ATCC 33699 / Western).